Consider the following 430-residue polypeptide: C4-dicarboxylate transport protein (430 aa).

A run of 8 helical transmembrane segments spans residues 9–29 (VLYVQVIFAIIVGVILGHFYP), 45–65 (LIKMVIGPIIFCTVVTGIAGM), 79–99 (LLYFEIVSTFALLLGLAATHL), 149–169 (GEILQILLIALLFGSVLAHLG), 185–205 (VLFGIVHIVTKLAPIGAFGAM), 223–243 (LIGTFYLTSVVFVLVVLGAIA), 308–328 (IYMTMAVLFIAQATNIELTWM), and 356–376 (AATLAVVPTIPLSGMVLILGI).

It belongs to the dicarboxylate/amino acid:cation symporter (DAACS) (TC 2.A.23) family.

The protein resides in the cell inner membrane. In terms of biological role, responsible for the transport of dicarboxylates such as succinate, fumarate, and malate from the periplasm across the membrane. The chain is C4-dicarboxylate transport protein from Burkholderia orbicola (strain MC0-3).